The sequence spans 574 residues: MEINNSNNNNNYVCAQHNRIEHANHHDLPDSDSDSSSREEELMNSSGGGNGKEPIGEKKKLPSHISEVISNERRESIIRELQQIKTISDYPSQANQYNLIEPIGEGTEGRVFKAYCIPLKENVAIKVVELDKMDPQFVKDVIKEVKVMNGNNHPNLIHYHTSFLENNQLWLVMDYLGGGSLADIMKFKYPDGIPEVLAVTVLKSLLKGLEYLHSHQRIHRDLKSDNILIGEDGAIELADFGVSAMFEKNTCCSRKTIVGTPCWMAPEIISERGYNQGVDIWSFGITAIELIRGKPPGYDLPPSKVFMNLLFGNSPSLQEEEDKGVCSHLYKDLVDKCLQKEPSKRPNASKLLEHKVFKQAKKNNYIVSHLLHGLTPCEDRYRESMSPASSNTPSPDSSRPSSPEHYNHGNVVNSPLQKNIKPSSLNKSSSSLELKNKNLSNPDLVNMPRAASHPVELNALELSSGSGPLSQSSDLPHGHLHKIGTPKKKHSPSGSIGDSHGSISPPLSTSPEKERKKGFFNHFRRHSIAKLFGSPKEGDHNHQHHKSEGDHEHHHFHFPWKHHHHSSSNNHVET.

Residues 24 to 41 show a composition bias toward basic and acidic residues; that stretch reads NHHDLPDSDSDSSSREEE. The disordered stretch occupies residues 24-64; sequence NHHDLPDSDSDSSSREEELMNSSGGGNGKEPIGEKKKLPSH. Positions 97 to 357 constitute a Protein kinase domain; that stretch reads YNLIEPIGEG…ASKLLEHKVF (261 aa). Residues 103–111 and Lys126 contribute to the ATP site; that span reads IGEGTEGRV. Asp221 acts as the Proton acceptor in catalysis. Thr256 carries the phosphothreonine; by autocatalysis modification. Disordered stretches follow at residues 381–447, 462–514, and 532–554; these read YRES…LVNM, LSSG…PEKE, and FGSP…HEHH. Low complexity-rich tracts occupy residues 386 to 403, 418 to 441, and 462 to 475; these read SPAS…PSSP, KNIK…NLSN, and LSSG…SSDL. The span at 478–491 shows a compositional bias: basic residues; it reads GHLHKIGTPKKKHS. Residues 492–506 are compositionally biased toward low complexity; the sequence is PSGSIGDSHGSISPP. Residues 536–553 are compositionally biased toward basic and acidic residues; sequence KEGDHNHQHHKSEGDHEH.

Belongs to the protein kinase superfamily. STE Ser/Thr protein kinase family. STE20 subfamily. Requires Mn(2+) as cofactor. Undergoes autophosphorylation in the catalytic domain.

The enzyme catalyses L-seryl-[protein] + ATP = O-phospho-L-seryl-[protein] + ADP + H(+). It carries out the reaction L-threonyl-[protein] + ATP = O-phospho-L-threonyl-[protein] + ADP + H(+). This chain is Serine/threonine-protein kinase fray1, found in Dictyostelium discoideum (Social amoeba).